We begin with the raw amino-acid sequence, 117 residues long: Large ribosomal subunit protein uL18 (117 aa).

The protein belongs to the universal ribosomal protein uL18 family. As to quaternary structure, part of the 50S ribosomal subunit; part of the 5S rRNA/L5/L18/L25 subcomplex. Contacts the 5S and 23S rRNAs.

This is one of the proteins that bind and probably mediate the attachment of the 5S RNA into the large ribosomal subunit, where it forms part of the central protuberance. In Polynucleobacter necessarius subsp. necessarius (strain STIR1), this protein is Large ribosomal subunit protein uL18.